The primary structure comprises 126 residues: MIDNGGRFFAMKHGRKIHRLSRPADQRRALLRGLTTQLLKHGRIKTTRAKASAMRKYVDKMITLAKEGSLHKRRQALGFIYEKQIVHALFAEVPERYGDRNGGYTRIIRTLPRRGDNAPMAYIELV.

The N-terminal 10 residues, M1 to A10, are a transit peptide targeting the chloroplast.

As to quaternary structure, component of the chloroplast large ribosomal subunit (LSU). Mature 70S chloroplast ribosomes of higher plants consist of a small (30S) and a large (50S) subunit. The 30S small subunit contains 1 molecule of ribosomal RNA (16S rRNA) and 24 different proteins. The 50S large subunit contains 3 rRNA molecules (23S, 5S and 4.5S rRNA) and 33 different proteins.

Its subcellular location is the plastid. It is found in the chloroplast. Its function is as follows. Component of the chloroplast ribosome (chloro-ribosome), a dedicated translation machinery responsible for the synthesis of chloroplast genome-encoded proteins, including proteins of the transcription and translation machinery and components of the photosynthetic apparatus. This is Large ribosomal subunit protein bL17c (RPL17) from Spinacia oleracea (Spinach).